We begin with the raw amino-acid sequence, 647 residues long: DNA ligase (647 aa).

Residues 30 to 34 (DEEYD), 79 to 80 (SM), and E105 each bind NAD(+). The active-site N6-AMP-lysine intermediate is the K107. Residues R128, E162, and K301 each contribute to the NAD(+) site. 4 residues coordinate Zn(2+): C395, C398, C411, and C416. The BRCT domain maps to 570 to 647 (KSDGVIFGKT…ESAFNELVKE (78 aa)).

The protein belongs to the NAD-dependent DNA ligase family. LigA subfamily. Mg(2+) is required as a cofactor. Mn(2+) serves as cofactor.

The enzyme catalyses NAD(+) + (deoxyribonucleotide)n-3'-hydroxyl + 5'-phospho-(deoxyribonucleotide)m = (deoxyribonucleotide)n+m + AMP + beta-nicotinamide D-nucleotide.. In terms of biological role, DNA ligase that catalyzes the formation of phosphodiester linkages between 5'-phosphoryl and 3'-hydroxyl groups in double-stranded DNA using NAD as a coenzyme and as the energy source for the reaction. It is essential for DNA replication and repair of damaged DNA. This chain is DNA ligase, found in Campylobacter jejuni (strain RM1221).